Consider the following 274-residue polypeptide: Hydroxyacylglutathione hydrolase, cytoplasmic isozyme (274 aa).

Zn(2+)-binding residues include His59, His61, Asp63, His64, His121, and Asp144. Substrate contacts are provided by residues Arg153 and His188–Tyr190. Zn(2+) is bound at residue His188. At Ser257 the chain carries Phosphoserine. Arg268–Lys271 provides a ligand contact to substrate.

It belongs to the metallo-beta-lactamase superfamily. Glyoxalase II family. Requires Zn(2+) as cofactor.

The protein resides in the cytoplasm. It catalyses the reaction an S-(2-hydroxyacyl)glutathione + H2O = a 2-hydroxy carboxylate + glutathione + H(+). It carries out the reaction (R)-S-lactoylglutathione + H2O = (R)-lactate + glutathione + H(+). The protein operates within secondary metabolite metabolism; methylglyoxal degradation; (R)-lactate from methylglyoxal: step 2/2. Its activity is regulated as follows. Inhibited by various thiol compounds such as glutathione and coenzyme A. Thiolesterase that catalyzes the hydrolysis of S-D-lactoylglutathione to form glutathione and D-lactic acid. Involved in the metabolism of methylglyoxal, a toxic compound for yeast proliferation, by converting methylglyoxal to lactate via S-D-lactoylglutathione by sequential enzyme reactions catalyzed by glyoxalase I and glyoxalase II. This Saccharomyces cerevisiae (strain ATCC 204508 / S288c) (Baker's yeast) protein is Hydroxyacylglutathione hydrolase, cytoplasmic isozyme.